Here is a 90-residue protein sequence, read N- to C-terminus: Large ribosomal subunit protein eL31 (90 aa).

This sequence belongs to the eukaryotic ribosomal protein eL31 family.

This Thermococcus gammatolerans (strain DSM 15229 / JCM 11827 / EJ3) protein is Large ribosomal subunit protein eL31.